Reading from the N-terminus, the 63-residue chain is Cytochrome c oxidase subunit 7C, mitochondrial (63 aa).

Residues 1 to 16 (MLGQSIRRFTTSVVRR) constitute a mitochondrion transit peptide. Over 17–33 (SHYEEGPGKNLPFSVEN) the chain is Mitochondrial matrix. Lys25 carries the post-translational modification N6-acetyllysine; alternate. N6-succinyllysine; alternate is present on Lys25. The helical transmembrane segment at 34–60 (KWRLLLMMTVYFGSGFAAPFFIVRHQL) threads the bilayer. Over 61-63 (LKK) the chain is Mitochondrial intermembrane.

The protein belongs to the cytochrome c oxidase VIIc family. As to quaternary structure, component of the cytochrome c oxidase (complex IV, CIV), a multisubunit enzyme composed of 14 subunits. The complex is composed of a catalytic core of 3 subunits MT-CO1, MT-CO2 and MT-CO3, encoded in the mitochondrial DNA, and 11 supernumerary subunits COX4I, COX5A, COX5B, COX6A, COX6B, COX6C, COX7A, COX7B, COX7C, COX8 and NDUFA4, which are encoded in the nuclear genome. The complex exists as a monomer or a dimer and forms supercomplexes (SCs) in the inner mitochondrial membrane with NADH-ubiquinone oxidoreductase (complex I, CI) and ubiquinol-cytochrome c oxidoreductase (cytochrome b-c1 complex, complex III, CIII), resulting in different assemblies (supercomplex SCI(1)III(2)IV(1) and megacomplex MCI(2)III(2)IV(2)). Interacts with RAB5IF.

Its subcellular location is the mitochondrion inner membrane. It participates in energy metabolism; oxidative phosphorylation. In terms of biological role, component of the cytochrome c oxidase, the last enzyme in the mitochondrial electron transport chain which drives oxidative phosphorylation. The respiratory chain contains 3 multisubunit complexes succinate dehydrogenase (complex II, CII), ubiquinol-cytochrome c oxidoreductase (cytochrome b-c1 complex, complex III, CIII) and cytochrome c oxidase (complex IV, CIV), that cooperate to transfer electrons derived from NADH and succinate to molecular oxygen, creating an electrochemical gradient over the inner membrane that drives transmembrane transport and the ATP synthase. Cytochrome c oxidase is the component of the respiratory chain that catalyzes the reduction of oxygen to water. Electrons originating from reduced cytochrome c in the intermembrane space (IMS) are transferred via the dinuclear copper A center (CU(A)) of subunit 2 and heme A of subunit 1 to the active site in subunit 1, a binuclear center (BNC) formed by heme A3 and copper B (CU(B)). The BNC reduces molecular oxygen to 2 water molecules using 4 electrons from cytochrome c in the IMS and 4 protons from the mitochondrial matrix. The chain is Cytochrome c oxidase subunit 7C, mitochondrial (Cox7c) from Rattus norvegicus (Rat).